We begin with the raw amino-acid sequence, 261 residues long: uncharacterized protein (261 aa).

The region spanning 15–75 (SINPEDIISG…AMTDRALSKY (61 aa)) is the HTH tetR-type domain. Residues 38-57 (SMPLLGKHLGVGVTSIYWYF) constitute a DNA-binding region (H-T-H motif). Residues 234–261 (AAGEVAVRRPTATADAPTPGARAKAVAR) form a disordered region. Over residues 241–261 (RRPTATADAPTPGARAKAVAR) the composition is skewed to low complexity.

This is an uncharacterized protein from Mycobacterium bovis (strain ATCC BAA-935 / AF2122/97).